The sequence spans 149 residues: Transcriptional repressor NrdR (149 aa).

A zinc finger spans residues 3–34 (CPFCSATDTKVIDSRLVSDGHQVRRRRQCLAC). The region spanning 49–139 (PKVIKSNGNR…VYRSFEDIKE (91 aa)) is the ATP-cone domain.

It belongs to the NrdR family. Zn(2+) serves as cofactor.

In terms of biological role, negatively regulates transcription of bacterial ribonucleotide reductase nrd genes and operons by binding to NrdR-boxes. This chain is Transcriptional repressor NrdR, found in Aliivibrio salmonicida (strain LFI1238) (Vibrio salmonicida (strain LFI1238)).